Consider the following 337-residue polypeptide: Heme A synthase (337 aa).

The next 7 membrane-spanning stretches (helical) occupy residues 3–23 (LARWLWVVAGLVVTIVAIGGI), 94–114 (VIGLAFLLPMMWFWIRGMIPA), 120–140 (LLALFALICGQGALGWYMVAS), 154–174 (LSAHLLTALFLLAGLVWTALD), 191–211 (GVAWMASIILFIQILLGAWVA), 248–268 (FLLHFLHRWWAWVAVIALVVL), and 289–309 (TMVVLGIATVLSEVSLWIAVA). Residue His254 participates in heme binding. A heme-binding site is contributed by His310. The chain crosses the membrane as a helical span at residues 311–331 (QLTGALLVISTAWAAHAIGTA).

It belongs to the COX15/CtaA family. Type 2 subfamily. As to quaternary structure, interacts with CtaB. Heme b is required as a cofactor.

The protein localises to the cell membrane. It catalyses the reaction Fe(II)-heme o + 2 A + H2O = Fe(II)-heme a + 2 AH2. The protein operates within porphyrin-containing compound metabolism; heme A biosynthesis; heme A from heme O: step 1/1. Catalyzes the conversion of heme O to heme A by two successive hydroxylations of the methyl group at C8. The first hydroxylation forms heme I, the second hydroxylation results in an unstable dihydroxymethyl group, which spontaneously dehydrates, resulting in the formyl group of heme A. This chain is Heme A synthase, found in Erythrobacter litoralis (strain HTCC2594).